Reading from the N-terminus, the 257-residue chain is Snake venom serine protease KN11 (257 aa).

The signal sequence occupies residues 1–18 (MVLIRVLANLLILQLSYA). Positions 19 to 24 (QKSSEL) are excised as a propeptide. Residues 25–248 (VTGGHPCNIN…HLDWIKSIIA (224 aa)) form the Peptidase S1 domain. 6 cysteine pairs are disulfide-bonded: C31–C162, C49–C65, C97–C255, C141–C209, C173–C188, and C199–C224. Active-site charge relay system residues include H64 and D109. N-linked (GlcNAc...) asparagine glycosylation is found at N120 and N121. S203 (charge relay system) is an active-site residue.

The protein belongs to the peptidase S1 family. Snake venom subfamily. Monomer. As to expression, expressed by the venom gland.

Its subcellular location is the secreted. Snake venom serine protease that may act in the hemostasis system of the prey. This Trimeresurus stejnegeri (Chinese green tree viper) protein is Snake venom serine protease KN11.